The primary structure comprises 276 residues: DNA repair protein RecO (276 aa).

This sequence belongs to the RecO family.

Involved in DNA repair and RecF pathway recombination. This is DNA repair protein RecO from Mycobacterium sp. (strain JLS).